Reading from the N-terminus, the 227-residue chain is Cytochrome c oxidase subunit 2 (227 aa).

Topologically, residues 1-14 (MAYPMQLGFQDATS) are mitochondrial intermembrane. The helical transmembrane segment at 15–45 (PIMEELLHFHDHTLMIVFLISSLVLYIISLM) threads the bilayer. The Mitochondrial matrix segment spans residues 46 to 59 (LTTKLTHTSTMDAQ). A helical transmembrane segment spans residues 60–87 (EVETVWTILPAIILILIALPSLRILYMM). At 88-227 (DEINNPSLTV…HFEEWSASMS (140 aa)) the chain is on the mitochondrial intermembrane side. 6 residues coordinate Cu cation: H161, C196, E198, C200, H204, and M207. E198 lines the Mg(2+) pocket.

Belongs to the cytochrome c oxidase subunit 2 family. As to quaternary structure, component of the cytochrome c oxidase (complex IV, CIV), a multisubunit enzyme composed of 14 subunits. The complex is composed of a catalytic core of 3 subunits MT-CO1, MT-CO2 and MT-CO3, encoded in the mitochondrial DNA, and 11 supernumerary subunits COX4I, COX5A, COX5B, COX6A, COX6B, COX6C, COX7A, COX7B, COX7C, COX8 and NDUFA4, which are encoded in the nuclear genome. The complex exists as a monomer or a dimer and forms supercomplexes (SCs) in the inner mitochondrial membrane with NADH-ubiquinone oxidoreductase (complex I, CI) and ubiquinol-cytochrome c oxidoreductase (cytochrome b-c1 complex, complex III, CIII), resulting in different assemblies (supercomplex SCI(1)III(2)IV(1) and megacomplex MCI(2)III(2)IV(2)). Found in a complex with TMEM177, COA6, COX18, COX20, SCO1 and SCO2. Interacts with TMEM177 in a COX20-dependent manner. Interacts with COX20. Interacts with COX16. Cu cation is required as a cofactor.

It is found in the mitochondrion inner membrane. The enzyme catalyses 4 Fe(II)-[cytochrome c] + O2 + 8 H(+)(in) = 4 Fe(III)-[cytochrome c] + 2 H2O + 4 H(+)(out). In terms of biological role, component of the cytochrome c oxidase, the last enzyme in the mitochondrial electron transport chain which drives oxidative phosphorylation. The respiratory chain contains 3 multisubunit complexes succinate dehydrogenase (complex II, CII), ubiquinol-cytochrome c oxidoreductase (cytochrome b-c1 complex, complex III, CIII) and cytochrome c oxidase (complex IV, CIV), that cooperate to transfer electrons derived from NADH and succinate to molecular oxygen, creating an electrochemical gradient over the inner membrane that drives transmembrane transport and the ATP synthase. Cytochrome c oxidase is the component of the respiratory chain that catalyzes the reduction of oxygen to water. Electrons originating from reduced cytochrome c in the intermembrane space (IMS) are transferred via the dinuclear copper A center (CU(A)) of subunit 2 and heme A of subunit 1 to the active site in subunit 1, a binuclear center (BNC) formed by heme A3 and copper B (CU(B)). The BNC reduces molecular oxygen to 2 water molecules using 4 electrons from cytochrome c in the IMS and 4 protons from the mitochondrial matrix. The chain is Cytochrome c oxidase subunit 2 (MT-CO2) from Antilocapra americana (Pronghorn).